We begin with the raw amino-acid sequence, 111 residues long: Inner membrane protein H108R (111 aa).

A helical membrane pass occupies residues 10-32 (LIVIITILITTRELSTTMLIVSL). A glycan (N-linked (GlcNAc...) asparagine; by host) is linked at asparagine 65.

It belongs to the asfivirus H108R family.

It localises to the virion membrane. The chain is Inner membrane protein H108R from African swine fever virus (isolate Tick/Malawi/Lil 20-1/1983) (ASFV).